Here is a 321-residue protein sequence, read N- to C-terminus: Lipoyl synthase (321 aa).

The [4Fe-4S] cluster site is built by Cys-68, Cys-73, Cys-79, Cys-94, Cys-98, Cys-101, and Ser-308. The Radical SAM core domain maps to 80 to 297; the sequence is FNHGTATFMI…KAEAMAMGFT (218 aa).

The protein belongs to the radical SAM superfamily. Lipoyl synthase family. [4Fe-4S] cluster serves as cofactor.

It localises to the cytoplasm. The enzyme catalyses [[Fe-S] cluster scaffold protein carrying a second [4Fe-4S](2+) cluster] + N(6)-octanoyl-L-lysyl-[protein] + 2 oxidized [2Fe-2S]-[ferredoxin] + 2 S-adenosyl-L-methionine + 4 H(+) = [[Fe-S] cluster scaffold protein] + N(6)-[(R)-dihydrolipoyl]-L-lysyl-[protein] + 4 Fe(3+) + 2 hydrogen sulfide + 2 5'-deoxyadenosine + 2 L-methionine + 2 reduced [2Fe-2S]-[ferredoxin]. Its pathway is protein modification; protein lipoylation via endogenous pathway; protein N(6)-(lipoyl)lysine from octanoyl-[acyl-carrier-protein]: step 2/2. Catalyzes the radical-mediated insertion of two sulfur atoms into the C-6 and C-8 positions of the octanoyl moiety bound to the lipoyl domains of lipoate-dependent enzymes, thereby converting the octanoylated domains into lipoylated derivatives. The chain is Lipoyl synthase from Pectobacterium atrosepticum (strain SCRI 1043 / ATCC BAA-672) (Erwinia carotovora subsp. atroseptica).